The chain runs to 861 residues: Bifunctional uridylyltransferase/uridylyl-removing enzyme (861 aa).

Residues 1 to 321 are uridylyltransferase; the sequence is MKNDNRIIKN…VYHQKQKIIR (321 aa). The uridylyl-removing stretch occupies residues 322–678; it reads LDDEFQLSNR…IMPHHSQGGT (357 aa). Positions 440 to 562 constitute an HD domain; it reads VDQHTLFVIR…LPHARYLDYL (123 aa). ACT domains follow at residues 679–760 and 788–861; these read EVFI…AVSR and QLFL…KSKY.

This sequence belongs to the GlnD family. Mg(2+) is required as a cofactor.

The enzyme catalyses [protein-PII]-L-tyrosine + UTP = [protein-PII]-uridylyl-L-tyrosine + diphosphate. The catalysed reaction is [protein-PII]-uridylyl-L-tyrosine + H2O = [protein-PII]-L-tyrosine + UMP + H(+). With respect to regulation, uridylyltransferase (UTase) activity is inhibited by glutamine, while glutamine activates uridylyl-removing (UR) activity. In terms of biological role, modifies, by uridylylation and deuridylylation, the PII regulatory proteins (GlnB and homologs), in response to the nitrogen status of the cell that GlnD senses through the glutamine level. Under low glutamine levels, catalyzes the conversion of the PII proteins and UTP to PII-UMP and PPi, while under higher glutamine levels, GlnD hydrolyzes PII-UMP to PII and UMP (deuridylylation). Thus, controls uridylylation state and activity of the PII proteins, and plays an important role in the regulation of nitrogen assimilation and metabolism. The polypeptide is Bifunctional uridylyltransferase/uridylyl-removing enzyme (Legionella pneumophila (strain Paris)).